The following is a 318-amino-acid chain: MYLINVLSLIIPILLAVAFLTLLERKILGYMQLRKGPNIVGPYGLLQPIADAIKLFIKEPLRPATSSKLMFTLAPTLALTLALSLWIPIPMPYPLVNLNLGVLFILAMSSLAVYSILWSGWASNSKYALIGALRAVAQTISYEVTLAIILLSIMMTNGSFTLSTLTTTQEHMWLIFPLWPLAMMWFISTLAETNRAPFDLTEGESELVSGFNVEYAAGPFALFFLAEYANIIMMNALTAILFFGAMHNPMFPELHTLNLITKTLILTMMFLWVRASYPRFRYDQLMHLLWKSFLPLTLALCMLHVSAPATFAGVPPHM.

8 consecutive transmembrane segments (helical) span residues 3–23 (LINVLSLIIPILLAVAFLTLL), 69–89 (LMFTLAPTLALTLALSLWIPI), 100–120 (LGVLFILAMSSLAVYSILWSG), 135–155 (AVAQTISYEVTLAIILLSIMM), 171–191 (HMWLIFPLWPLAMMWFISTLA), 223–243 (FFLAEYANIIMMNALTAILFF), 253–273 (ELHTLNLITKTLILTMMFLWV), and 293–313 (FLPLTLALCMLHVSAPATFAG).

The protein belongs to the complex I subunit 1 family.

Its subcellular location is the mitochondrion inner membrane. The enzyme catalyses a ubiquinone + NADH + 5 H(+)(in) = a ubiquinol + NAD(+) + 4 H(+)(out). Functionally, core subunit of the mitochondrial membrane respiratory chain NADH dehydrogenase (Complex I) that is believed to belong to the minimal assembly required for catalysis. Complex I functions in the transfer of electrons from NADH to the respiratory chain. The immediate electron acceptor for the enzyme is believed to be ubiquinone. This Dasypus novemcinctus (Nine-banded armadillo) protein is NADH-ubiquinone oxidoreductase chain 1 (MT-ND1).